Consider the following 355-residue polypeptide: NADH-quinone oxidoreductase subunit H (355 aa).

The next 8 helical transmembrane spans lie at Ile-17–Ile-37, Gly-86–Ile-106, Val-119–Gly-139, Ile-165–Val-185, Ile-204–Leu-224, Tyr-262–Pro-282, Trp-291–Met-311, and Phe-332–Ile-352.

This sequence belongs to the complex I subunit 1 family. In terms of assembly, NDH-1 is composed of 14 different subunits. Subunits NuoA, H, J, K, L, M, N constitute the membrane sector of the complex.

It is found in the cell inner membrane. The catalysed reaction is a quinone + NADH + 5 H(+)(in) = a quinol + NAD(+) + 4 H(+)(out). Functionally, NDH-1 shuttles electrons from NADH, via FMN and iron-sulfur (Fe-S) centers, to quinones in the respiratory chain. The immediate electron acceptor for the enzyme in this species is believed to be ubiquinone. Couples the redox reaction to proton translocation (for every two electrons transferred, four hydrogen ions are translocated across the cytoplasmic membrane), and thus conserves the redox energy in a proton gradient. This subunit may bind ubiquinone. The chain is NADH-quinone oxidoreductase subunit H from Bradyrhizobium diazoefficiens (strain JCM 10833 / BCRC 13528 / IAM 13628 / NBRC 14792 / USDA 110).